A 316-amino-acid chain; its full sequence is Ribosomal protein L11 methyltransferase (316 aa).

Positions 162, 183, 205, and 248 each coordinate S-adenosyl-L-methionine.

Belongs to the methyltransferase superfamily. PrmA family.

It is found in the cytoplasm. It carries out the reaction L-lysyl-[protein] + 3 S-adenosyl-L-methionine = N(6),N(6),N(6)-trimethyl-L-lysyl-[protein] + 3 S-adenosyl-L-homocysteine + 3 H(+). Its function is as follows. Methylates ribosomal protein L11. The chain is Ribosomal protein L11 methyltransferase from Levilactobacillus brevis (strain ATCC 367 / BCRC 12310 / CIP 105137 / JCM 1170 / LMG 11437 / NCIMB 947 / NCTC 947) (Lactobacillus brevis).